The sequence spans 477 residues: MKVNLPAFERAGVMIVGDVMLDRYWYGPTCRISPEAPVPVVKVNTVEERPGGAANVAMNIASLGANARLVGLTGIDDAARALSKTLAEFNVKCDFVSVPTHPTITKLRVLSRNQQLIRLDFEEGFEGVDPEPLHERINQALGSIGALVLSDYAKGALTSVQTMIALARQADVAVLIDPKGTDFERYRGATLLTPNLSEFEAVAGKCKSEDELVERGMKLIANYDLSALLVTRSEQGMTLLQPNKAPLHMPTQAQEVYDVTGAGDTVIGVLAATLAAGNTLEEACYFANAAAGVVVGKLGTSTVSPVELENAVRGRAATGFGVMTEEELKQAVASARKRGEKVVMTNGVFDILHAGHVSYLANARKLGDRLIVAVNSDASTKRLKGESRPVNPLEQRMIVLGALESVDWVVSFEEDTPQRLIAGILPDLLVKGGDYKPEEIAGSEEVWANGGEVMVLNFEDGCSTTNIIKKIQTESEK.

The segment at M1–T318 is ribokinase. An ATP-binding site is contributed by N195–E198. The active site involves D264. A cytidylyltransferase region spans residues M344–K477.

It in the N-terminal section; belongs to the carbohydrate kinase PfkB family. In the C-terminal section; belongs to the cytidylyltransferase family. In terms of assembly, homodimer.

It carries out the reaction D-glycero-beta-D-manno-heptose 7-phosphate + ATP = D-glycero-beta-D-manno-heptose 1,7-bisphosphate + ADP + H(+). The catalysed reaction is D-glycero-beta-D-manno-heptose 1-phosphate + ATP + H(+) = ADP-D-glycero-beta-D-manno-heptose + diphosphate. The protein operates within nucleotide-sugar biosynthesis; ADP-L-glycero-beta-D-manno-heptose biosynthesis; ADP-L-glycero-beta-D-manno-heptose from D-glycero-beta-D-manno-heptose 7-phosphate: step 1/4. It functions in the pathway nucleotide-sugar biosynthesis; ADP-L-glycero-beta-D-manno-heptose biosynthesis; ADP-L-glycero-beta-D-manno-heptose from D-glycero-beta-D-manno-heptose 7-phosphate: step 3/4. Functionally, catalyzes the phosphorylation of D-glycero-D-manno-heptose 7-phosphate at the C-1 position to selectively form D-glycero-beta-D-manno-heptose-1,7-bisphosphate. In terms of biological role, catalyzes the ADP transfer from ATP to D-glycero-beta-D-manno-heptose 1-phosphate, yielding ADP-D-glycero-beta-D-manno-heptose. The chain is Bifunctional protein HldE from Salmonella arizonae (strain ATCC BAA-731 / CDC346-86 / RSK2980).